Reading from the N-terminus, the 266-residue chain is uncharacterized protein (266 aa).

The chain crosses the membrane as a helical span at residues 12–28; that stretch reads ILAAGLAIGCAGGYYAY. One can recognise an FAD-binding FR-type domain in the interval 40–140; the sequence is EIYAPFTVNK…RGPFKTTKLD (101 aa).

It belongs to the flavoprotein pyridine nucleotide cytochrome reductase family. FAD serves as cofactor.

Its subcellular location is the mitochondrion outer membrane. This is an uncharacterized protein from Schizosaccharomyces pombe (strain 972 / ATCC 24843) (Fission yeast).